The chain runs to 304 residues: MSSIKHLVYAVIRFLREQSQMDTYTSDEQESLEVAIQCLETVFKISPEDTHLAVSQPLTEMFTSSFCKNDVLPLSNSVPEDVGKADQLKDEGNNHMKEENYAAAVDCYTQAIELDPNNAVYYCNRAAAQSKLGHYTDAIKDCEKAIAIDSKYSKAYGRMGLALTALNKFEEAVTSYQKALDLDPENDSYKSNLKIAEQKLREVSSPTGTGLSFDMASLINNPAFISMAASLMQNPQVQQLMSGMMTNAIGGPAAGVGGLTDLSSLIQAGQQFAQQIQQQNPELIEQLRNHIRSRSFSSSAEEHS.

TPR repeat units lie at residues 15 to 49 (LREQSQMDTYTSDEQESLEVAIQCLETVFKISPED), 85 to 118 (ADQLKDEGNNHMKEENYAAAVDCYTQAIELDPNN), 119 to 152 (AVYYCNRAAAQSKLGHYTDAIKDCEKAIAIDSKY), and 153 to 186 (SKAYGRMGLALTALNKFEEAVTSYQKALDLDPEN). Position 131 is an N6-acetyllysine (lysine 131). Serine 293, serine 295, and serine 297 each carry phosphoserine.

It belongs to the SGT family. Homooligomerize.

Functionally, co-chaperone that binds directly to HSC70 and HSP70 and regulates their ATPase activity. The sequence is that of Small glutamine-rich tetratricopeptide repeat-containing protein beta (SGTB) from Homo sapiens (Human).